We begin with the raw amino-acid sequence, 165 residues long: Putative universal stress protein SH1215 (165 aa).

This sequence belongs to the universal stress protein A family.

The protein localises to the cytoplasm. This is Putative universal stress protein SH1215 from Staphylococcus haemolyticus (strain JCSC1435).